Here is a 495-residue protein sequence, read N- to C-terminus: tRNA-guanine(15) transglycosylase (495 aa).

Asp-83 (nucleophile) is an active-site residue. Asp-118 contacts substrate. Positions 273 and 278 each coordinate Zn(2+).

Belongs to the archaeosine tRNA-ribosyltransferase family. It depends on Zn(2+) as a cofactor.

The enzyme catalyses guanosine(15) in tRNA + 7-cyano-7-deazaguanine = 7-cyano-7-carbaguanosine(15) in tRNA + guanine. Its pathway is tRNA modification; archaeosine-tRNA biosynthesis. Functionally, exchanges the guanine residue with 7-cyano-7-deazaguanine (preQ0) at position 15 in the dihydrouridine loop (D-loop) of archaeal tRNAs. The polypeptide is tRNA-guanine(15) transglycosylase (Pyrobaculum aerophilum (strain ATCC 51768 / DSM 7523 / JCM 9630 / CIP 104966 / NBRC 100827 / IM2)).